We begin with the raw amino-acid sequence, 120 residues long: Protein p14.5 (120 aa).

Disordered regions lie at residues 1-27 (MADF…LEYD) and 80-120 (REFT…HKSK). The residue at position 2 (alanine 2) is an N-acetylalanine; by host. Residues 103–120 (KPKKKKHLFPKLSSHKSK) show a composition bias toward basic residues.

The protein belongs to the asfivirus structural protein p14.5 family. Interacts with the major capsid protein. Interacts with host IRF3; this interaction interferes with the recruitment of IRF3 to TBK1. Acetylated.

It localises to the virion. In terms of biological role, structural protein required for transport of intracellular particles from the assembly sites to the plasma membrane. Binds to both ssDNA and dsDNA. Suppressed the activation of the cGAS/STING pathway by interfering with the recruitment of IRF3 to TBK1, which in turn suppresses IRF3 phosphorylation, decreasing interferon production. This Ornithodoros (relapsing fever ticks) protein is Protein p14.5.